A 263-amino-acid chain; its full sequence is Very long chain fatty acid elongase F (263 aa).

Transmembrane regions (helical) follow at residues 10–30, 55–75, 98–118, 135–155, 159–179, 193–213, and 223–243; these read IPVFSDPWITMATLSGYLLFV, IFQILYNGLILVLGVHFLFVL, LICILYMLNKFVDLVETIFFV, FAMAFLGYLYYYFHGYGGVAF, LCLLNTAVHVIMYAYYYLSSI, ITIAQLVQFGIILLHCTITLA, and LTYGCGSLSAFFAVIFSQFYY.

The protein belongs to the ELO family. No expression in adults.

The protein localises to the endoplasmic reticulum membrane. It carries out the reaction a very-long-chain acyl-CoA + malonyl-CoA + H(+) = a very-long-chain 3-oxoacyl-CoA + CO2 + CoA. Its function is as follows. Condensing enzyme that elongates saturated and monounsaturated very long chain fatty acids, to yield products up to 30 carbons in length. This Drosophila simulans (Fruit fly) protein is Very long chain fatty acid elongase F.